The following is a 159-amino-acid chain: Transcription antitermination protein NusB (159 aa).

This sequence belongs to the NusB family.

Involved in transcription antitermination. Required for transcription of ribosomal RNA (rRNA) genes. Binds specifically to the boxA antiterminator sequence of the ribosomal RNA (rrn) operons. In Xanthomonas campestris pv. campestris (strain 8004), this protein is Transcription antitermination protein NusB.